We begin with the raw amino-acid sequence, 373 residues long: Anhydro-N-acetylmuramic acid kinase (373 aa).

13 to 20 is an ATP binding site; it reads GTSMDGID.

This sequence belongs to the anhydro-N-acetylmuramic acid kinase family.

The catalysed reaction is 1,6-anhydro-N-acetyl-beta-muramate + ATP + H2O = N-acetyl-D-muramate 6-phosphate + ADP + H(+). Its pathway is amino-sugar metabolism; 1,6-anhydro-N-acetylmuramate degradation. It participates in cell wall biogenesis; peptidoglycan recycling. Catalyzes the specific phosphorylation of 1,6-anhydro-N-acetylmuramic acid (anhMurNAc) with the simultaneous cleavage of the 1,6-anhydro ring, generating MurNAc-6-P. Is required for the utilization of anhMurNAc either imported from the medium or derived from its own cell wall murein, and thus plays a role in cell wall recycling. The protein is Anhydro-N-acetylmuramic acid kinase of Brucella suis (strain ATCC 23445 / NCTC 10510).